A 71-amino-acid chain; its full sequence is Small ribosomal subunit protein bS21 (71 aa).

The span at 48–59 (EKASLAKRHAKR) shows a compositional bias: basic residues. Residues 48 to 71 (EKASLAKRHAKRNARENARNTRLY) are disordered. Residues 60–71 (NARENARNTRLY) show a composition bias toward basic and acidic residues.

The protein belongs to the bacterial ribosomal protein bS21 family.

This chain is Small ribosomal subunit protein bS21, found in Actinobacillus pleuropneumoniae serotype 5b (strain L20).